A 931-amino-acid chain; its full sequence is Dipeptidyl aminopeptidase A (931 aa).

The span at 1 to 13 shows a compositional bias: basic residues; it reads MSASTHSHKRKNS. The interval 1–58 is disordered; sequence MSASTHSHKRKNSHLFPQRKSSNSSMDKPFFPNNDSVANTDPQSNENGHTINEIRPTE. Topologically, residues 1 to 119 are cytoplasmic; sequence MSASTHSHKR…GEWSLPEKRS (119 aa). Positions 33–50 are enriched in polar residues; sequence NNDSVANTDPQSNENGHT. The chain crosses the membrane as a helical; Signal-anchor for type II membrane protein span at residues 120–140; it reads YVLVFTLIALSVLVLLVILIP. The Lumenal segment spans residues 141–931; the sequence is SKLLPTKITR…RFDNTEVLHL (791 aa). Asn377 carries an N-linked (GlcNAc...) asparagine glycan. Catalysis depends on Ser785, which acts as the Charge relay system. Residue Asn814 is glycosylated (N-linked (GlcNAc...) asparagine). Residues Asp863 and His896 each act as charge relay system in the active site.

It belongs to the peptidase S9B family.

The protein resides in the vacuole membrane. Its function is as follows. Responsible for the proteolytic maturation of the alpha-factor precursor. In Saccharomyces cerevisiae (strain ATCC 204508 / S288c) (Baker's yeast), this protein is Dipeptidyl aminopeptidase A (STE13).